The sequence spans 616 residues: Electron transfer flavoprotein-ubiquinone oxidoreductase, mitochondrial (616 aa).

A mitochondrion-targeting transit peptide spans 1–32; it reads MLVRLTKLSCPAYQWFHALKIKKCLPLCAPRC. Residue 70-84 participates in FAD binding; the sequence is VVIVGAGPAGLSAAI. Lys95 bears the N6-acetyllysine mark. An intramembrane segment occupies 108-129; that stretch reads IGAHTLSGACLDPAAFKELFPD. Residues Lys131 and Lys222 each carry the N6-acetyllysine modification. A ubiquinone-binding residues include Gly304 and Gly305. Residues Lys356 and Lys415 each carry the N6-acetyllysine modification. The stretch at 427–446 is an intramembrane region; sequence AGLHVTEYEDNLKQSWVWKE. Ser550 carries the post-translational modification Phosphoserine. Residues Cys560, Cys585, Cys588, and Cys591 each contribute to the [4Fe-4S] cluster site. In terms of domain architecture, 4Fe-4S ferredoxin-type spans 576–605; it reads FRLQINAQNCVHCKTCDIKDPSQNINWVVP.

Belongs to the ETF-QO/FixC family. In terms of assembly, monomer. [4Fe-4S] cluster serves as cofactor. FAD is required as a cofactor.

The protein localises to the mitochondrion inner membrane. The enzyme catalyses a ubiquinone + reduced [electron-transfer flavoprotein] = a ubiquinol + oxidized [electron-transfer flavoprotein] + H(+). Accepts electrons from ETF and reduces ubiquinone. This Rattus norvegicus (Rat) protein is Electron transfer flavoprotein-ubiquinone oxidoreductase, mitochondrial (Etfdh).